Reading from the N-terminus, the 160-residue chain is SsrA-binding protein (160 aa).

It belongs to the SmpB family.

It localises to the cytoplasm. Required for rescue of stalled ribosomes mediated by trans-translation. Binds to transfer-messenger RNA (tmRNA), required for stable association of tmRNA with ribosomes. tmRNA and SmpB together mimic tRNA shape, replacing the anticodon stem-loop with SmpB. tmRNA is encoded by the ssrA gene; the 2 termini fold to resemble tRNA(Ala) and it encodes a 'tag peptide', a short internal open reading frame. During trans-translation Ala-aminoacylated tmRNA acts like a tRNA, entering the A-site of stalled ribosomes, displacing the stalled mRNA. The ribosome then switches to translate the ORF on the tmRNA; the nascent peptide is terminated with the 'tag peptide' encoded by the tmRNA and targeted for degradation. The ribosome is freed to recommence translation, which seems to be the essential function of trans-translation. In Rhodospirillum rubrum (strain ATCC 11170 / ATH 1.1.1 / DSM 467 / LMG 4362 / NCIMB 8255 / S1), this protein is SsrA-binding protein.